The chain runs to 152 residues: Ninjurin-1 (152 aa).

At methionine 1 the chain carries N-acetylmethionine. The segment covering 1–10 has biased composition (acidic residues); that stretch reads MESGTEEYEL. Positions 1–29 are disordered; the sequence is MESGTEEYELNGDLRPGSPGSPDALPPRW. The Extracellular portion of the chain corresponds to 1–78; sequence MESGTEEYEL…EQGNDFAFFV (78 aa). Phosphoserine is present on residues serine 18 and serine 21. Residues 26–37 form an N-terminal adhesion motif region; that stretch reads PPRWGLRNRPIN. A required to induce plasma membrane rupture region spans residues 40–69; sequence HYANKKSAAESMLDIALLMANASQLKAVVE. The tract at residues 44-55 is helix alpha1; sequence KKSAAESMLDIA. The helix alpha2 stretch occupies residues 58–74; the sequence is MANASQLKAVVEQGNDF. The N-linked (GlcNAc...) asparagine glycan is linked to asparagine 60. Residues 79 to 103 form a helical membrane-spanning segment; sequence PLVVLISISLVLQIGVGVLLIFLVK. The Cytoplasmic portion of the chain corresponds to 104-113; it reads YDLNNPAKHA. The helical transmembrane segment at 114-138 threads the bilayer; sequence KLDFLNNLATGLVFIIVVVNIFITA. The Extracellular portion of the chain corresponds to 139–152; that stretch reads FGVQKPVMDVAPRQ.

It belongs to the ninjurin family. As to quaternary structure, homodimer; in absence of death stimuli, forms an inactive homodimer. Homooligomer; in response to death stimuli, homooligomerizes into long, highly branched filaments and large, ring-shaped structures in the membrane. In terms of processing, cleaved by MMP9 protease to generate the Secreted ninjurin-1 form. Post-translationally, N-linked glycosylation is required for homooligomerization.

The protein localises to the cell membrane. The protein resides in the synaptic cell membrane. Its subcellular location is the secreted. With respect to regulation, in response to death stimuli, homooligomerizes and disrupts membrane integrity by introducing the hydrophilic faces of alpha1 and alpha2 helices into the hydrophobic membrane. Homooligomerization and ability to mediate plasma membrane rupture is inhibited by glycine; it is unclear whether glycine directly or indirectly inhibits homooligomerization. In normal conditions, NINJ1 is autoinhibited via formation of a homodimer: in the inactive homodimer, the alpha1 and alpha2 helices (residues 44-74) form a single transmembrane region without a kink, in which hydrophilic faces of alpha1 and alpha2 helices are sequestered. Functionally, effector of various programmed cell death, such as pyroptosis and necroptosis, which mediates plasma membrane rupture (cytolysis). Oligomerizes in response to death stimuli and forms ring-like structures on the plasma membrane: acts by cutting and shedding membrane disks, like a cookie cutter, leading to membrane damage and loss that cannot be repaired by the cell. Plasma membrane rupture leads to release intracellular molecules named damage-associated molecular patterns (DAMPs) that propagate the inflammatory response. Mechanistically, mediates plasma membrane rupture by introducing hydrophilic faces of 2 alpha helices into the hydrophobic membrane. Induces plasma membrane rupture downstream of Gasdermin (GSDMA, GSDMB, GSDMC, GSDMD, or GSDME) or MLKL during pyroptosis or necroptosis, respectively. Acts as an effector of PANoptosis downstream of CASP1, CASP4, CASP8 and RIPK3. Also induces plasma membrane rupture in response to cell swelling caused by osmotic stress and ferroptosis downstream of lipid peroxidation. Acts as a regulator of Toll-like receptor 4 (TLR4) signaling triggered by lipopolysaccharide (LPS) during systemic inflammation; directly binds LPS. Involved in leukocyte migration during inflammation by promoting transendothelial migration of macrophages via homotypic binding. Promotes the migration of monocytes across the brain endothelium to central nervous system inflammatory lesions. Also acts as a homophilic transmembrane adhesion molecule involved in various processes such as axonal growth, cell chemotaxis and angiogenesis. Promotes cell adhesion by mediating homophilic interactions via its extracellular N-terminal adhesion motif (N-NAM). Involved in the progression of the inflammatory stress by promoting cell-to-cell interactions between immune cells and endothelial cells. Plays a role in nerve regeneration by promoting maturation of Schwann cells. Acts as a regulator of angiogenesis. Promotes the formation of new vessels by mediating the interaction between capillary pericyte cells and endothelial cells. Also mediates vascular functions in penile tissue as well as vascular formation. Promotes osteoclasts development by enhancing the survival of prefusion osteoclasts. Also involved in striated muscle growth and differentiation. Also involved in cell senescence in a p53/TP53 manner, possibly by acting as an indirect regulator of p53/TP53 mRNA translation. Secreted form generated by cleavage, which has chemotactic activity. Acts as an anti-inflammatory mediator by promoting monocyte recruitment, thereby ameliorating atherosclerosis. In Mus musculus (Mouse), this protein is Ninjurin-1.